A 762-amino-acid chain; its full sequence is Mitochondrial intermediate peptidase (762 aa).

The N-terminal 28 residues, 1–28, are a transit peptide targeting the mitochondrion; sequence MQVRTLLTLGKKKVIGNRQCILSLYRKY. His544 lines the Zn(2+) pocket. Glu545 is a catalytic residue. The Zn(2+) site is built by His548 and His551.

This sequence belongs to the peptidase M3 family. Zn(2+) is required as a cofactor.

It localises to the mitochondrion matrix. It carries out the reaction Release of an N-terminal octapeptide as second stage of processing of some proteins imported into the mitochondrion.. Its function is as follows. Cleaves proteins, imported into the mitochondrion, to their mature size. While most mitochondrial precursor proteins are processed to the mature form in one step by mitochondrial processing peptidase (MPP), the sequential cleavage by MIP of an octapeptide after initial processing by MPP is a required step for a subgroup of nuclear-encoded precursor proteins destined for the matrix or the inner membrane. In Schizosaccharomyces pombe (strain 972 / ATCC 24843) (Fission yeast), this protein is Mitochondrial intermediate peptidase (oct1).